The sequence spans 328 residues: P2Y purinoceptor 6 (328 aa).

Residues 1–27 are Extracellular-facing; the sequence is MEQDNGTIQAPGLPPTTCVYREDFKRL. A glycan (N-linked (GlcNAc...) asparagine) is linked at N5. Residues 28–48 form a helical membrane-spanning segment; it reads LLTPVYSVVLVVGLPLNICVI. Over 49-62 the chain is Cytoplasmic; sequence AQICASRRTLTRSA. The helical transmembrane segment at 63 to 83 threads the bilayer; the sequence is VYTLNLALADLMYACSLPLLI. Residues 84 to 101 are Extracellular-facing; that stretch reads YNYARGDHWPFGDLACRF. A disulfide bridge links C99 with C177. Residues 102–122 form a helical membrane-spanning segment; it reads VRFLFYANLHGSILFLTCISF. Over 123-144 the chain is Cytoplasmic; the sequence is QRYLGICHPLASWHKRGGRRAA. Residues 145–165 traverse the membrane as a helical segment; sequence WVVCGVVWLAVTAQCLPTAVF. Topologically, residues 166–194 are extracellular; the sequence is AATGIQRNRTVCYDLSPPILSTRYLPYGM. The N-linked (GlcNAc...) asparagine glycan is linked to N173. The helical transmembrane segment at 195–215 threads the bilayer; the sequence is ALTVIGFLLPFIALLACYCRM. The Cytoplasmic portion of the chain corresponds to 216–236; the sequence is ARRLCRQDGPAGPVAQERRSK. Residues 237–257 traverse the membrane as a helical segment; it reads AARMAVVVAAVFAISFLPFHI. Topologically, residues 258-280 are extracellular; sequence TKTAYLAVRSTPGVSCPVLETFA. Residues 281-303 traverse the membrane as a helical segment; that stretch reads AAYKGTRPFASVNSVLDPILFYF. Residues 304 to 328 are Cytoplasmic-facing; sequence TQQKFRRQPHDLLQRLTAKWQRQRV.

This sequence belongs to the G-protein coupled receptor 1 family.

The protein localises to the cell membrane. Functionally, receptor for extracellular UTP &gt; ADP = 2-methylthio-ATP &gt; ADP-beta-S &gt; ATP = ATP-gamma-S. The activity of this receptor is mediated by G proteins which activate a phosphatidylinositol-calcium second messenger system. Functionally coupled to phospholipase C. This Mus musculus (Mouse) protein is P2Y purinoceptor 6 (P2ry6).